The following is a 443-amino-acid chain: Gasdermin-A2 (443 aa).

Residues 1–249 (MSMFEDVTRA…QGSTVQMISG (249 aa)) form a triggers pyroptosis region. 9–13 (RALAR) is a binding site for a cardiolipin. 4 consecutive transmembrane segments (beta stranded) span residues 78-95 (NFSFKNMLDVRVEGDVEV), 99-120 (MKVKGTVGLSQSSTLEVQMLSV), 164-179 (VTLKRASNAISKFSLN), and 183-197 (LGLQGSVNHKEAVTI). Positions 249–312 (GEMHEDFKTL…GALDKGHEVT (64 aa)) form a coiled coil.

It belongs to the gasdermin family. Homooligomer; homooligomeric ring-shaped pore complex containing 18-36 subunits when inserted in the membrane. Cleavage relieves autoinhibition by releasing the N-terminal moiety (Gasdermin-A2, N-terminal) that initiates pyroptosis. In contrast to Gsdma, not cleaved by bacterial effector protein SpeB. In terms of processing, palmitoylated. As to expression, expressed in the gastrointestinal tract, specifically from the middle to the upper region of the gastric mucosa in the glandular stomach.

The protein resides in the cytoplasm. It is found in the perinuclear region. Its subcellular location is the cytosol. It localises to the cell membrane. Its activity is regulated as follows. The full-length protein before cleavage is inactive: intramolecular interactions between N- and C-terminal domains mediate autoinhibition in the absence of activation signal. The intrinsic pyroptosis-inducing activity is carried by the released N-terminal moiety (Gasdermin-A2, N-terminal). Functionally, this form constitutes the precursor of the pore-forming protein and acts as a sensor of infection: upon bacterial infection, specifically cleaved by some bacterial effector protein, releasing the N-terminal moiety (Gasdermin-A2, N-terminal) that binds to membranes and forms pores, triggering pyroptosis. Its function is as follows. Pore-forming protein that causes membrane permeabilization and pyroptosis. Released upon cleavage of Gasdermin-A2, and binds to membrane inner leaflet lipids. Homooligomerizes within the membrane and forms pores of 10-15 nanometers (nm) of inner diameter, triggering pyroptosis. Binds to membrane inner leaflet lipids, such as phosphatidylinositol (4,5)-bisphosphate. This chain is Gasdermin-A2, found in Mus musculus (Mouse).